The primary structure comprises 760 residues: 5-methyltetrahydropteroyltriglutamate--homocysteine methyltransferase (760 aa).

5-methyltetrahydropteroyltri-L-glutamate is bound by residues 24–27 and Lys-118; that span reads RELK. L-homocysteine contacts are provided by residues 437–439 and Glu-490; that span reads IGS. L-methionine contacts are provided by residues 437-439 and Glu-490; that span reads IGS. 5-methyltetrahydropteroyltri-L-glutamate contacts are provided by residues 521-522 and Trp-567; that span reads RC. Asp-605 serves as a coordination point for L-homocysteine. Asp-605 is a binding site for L-methionine. 5-methyltetrahydropteroyltri-L-glutamate is bound at residue Glu-611. Residues His-647, Cys-649, and Glu-671 each coordinate Zn(2+). His-700 functions as the Proton donor in the catalytic mechanism. Cys-732 is a Zn(2+) binding site.

This sequence belongs to the vitamin-B12 independent methionine synthase family. The cofactor is Zn(2+).

The enzyme catalyses 5-methyltetrahydropteroyltri-L-glutamate + L-homocysteine = tetrahydropteroyltri-L-glutamate + L-methionine. The protein operates within amino-acid biosynthesis; L-methionine biosynthesis via de novo pathway; L-methionine from L-homocysteine (MetE route): step 1/1. Catalyzes the transfer of a methyl group from 5-methyltetrahydrofolate to homocysteine resulting in methionine formation. The chain is 5-methyltetrahydropteroyltriglutamate--homocysteine methyltransferase from Mycobacterium leprae (strain TN).